The chain runs to 452 residues: Netrin-5 (452 aa).

A signal peptide spans 1 to 34; sequence MTDYRTLFSSPGAGSTVTTPITLSLLLLLSQATS. Disulfide bonds link Cys-173-Cys-182, Cys-175-Cys-191, Cys-193-Cys-202, Cys-205-Cys-225, Cys-228-Cys-240, Cys-230-Cys-247, Cys-249-Cys-258, Cys-261-Cys-275, Cys-298-Cys-376, Cys-302-Cys-378, and Cys-317-Cys-438. Laminin EGF-like domains follow at residues 173–227 and 228–277; these read CQCH…PCLP and CQCH…PCQR. The NTR domain occupies 298–438; that stretch reads CQGYCNVSVS…LQQKERGGAC (141 aa). A glycan (N-linked (GlcNAc...) asparagine) is linked at Asn-303.

The protein localises to the secreted. In terms of biological role, plays a role in neurogenesis. Prevents motor neuron cell body migration out of the neural tube. The protein is Netrin-5 (Ntn5) of Mus musculus (Mouse).